The following is a 230-amino-acid chain: Potassium/proton antiporter CemA (230 aa).

4 helical membrane passes run 7–27, 106–126, 145–165, and 181–201; these read LPSFLYLVFIVLLPWGVSFSF, IILHFSTNIICLAILSGSFFL, LNDSVKAFFILLVTDFFVGFH, and LGWVPNELIFTIFVCSFPVIL.

This sequence belongs to the CemA family.

It localises to the plastid. Its subcellular location is the chloroplast inner membrane. The enzyme catalyses K(+)(in) + H(+)(out) = K(+)(out) + H(+)(in). In terms of biological role, contributes to K(+)/H(+) antiport activity by supporting proton efflux to control proton extrusion and homeostasis in chloroplasts in a light-dependent manner to modulate photosynthesis. Prevents excessive induction of non-photochemical quenching (NPQ) under continuous-light conditions. Indirectly promotes efficient inorganic carbon uptake into chloroplasts. This Oryza nivara (Indian wild rice) protein is Potassium/proton antiporter CemA.